Consider the following 1100-residue polypeptide: Serine/threonine/tyrosine-interacting-like protein 2 (1100 aa).

Over residues 1 to 12 (MASSVEDQQLQQ) the composition is skewed to polar residues. Positions 1–21 (MASSVEDQQLQQEEAESVKDV) are disordered. The region spanning 141–289 (SPVDEVWPNV…LRQLNETLME (149 aa)) is the Tyrosine-protein phosphatase domain. Over residues 356–374 (CGSQQPNMQQPADQPSLPG) the composition is skewed to polar residues. Disordered regions lie at residues 356–383 (CGSQQPNMQQPADQPSLPGQTREDEDGD), 411–436 (EDEDDGEDKTQRAVRPDDLESVTSED), 479–504 (AAARHRLQDQDTSSETQQKKIDDDVQ), 542–561 (KENAENGEQSEAEPAAAPDL), 575–615 (KQQK…ERSR), 667–686 (VLSGRSTRSLPPAVLETPAP), 888–1060 (CEKP…DEEI), and 1075–1100 (VAEEMEDDEVLTAWRKQEESKSHDHK). Residues 418 to 428 (DKTQRAVRPDD) are compositionally biased toward basic and acidic residues. Residues 580–615 (HGGEENKEEILQMSRGEDTATARRRQRREEVLERSR) show a composition bias toward basic and acidic residues. The segment covering 667–676 (VLSGRSTRSL) has biased composition (low complexity). Basic and acidic residues predominate over residues 888–898 (CEKPKPKRDYG). Composition is skewed to polar residues over residues 907-916 (ASANNPTSSI), 994-1013 (SYSSRRSPSFNGLSESTSFA), and 1029-1041 (FQNHSIKQKSSVY). The span at 1089-1100 (RKQEESKSHDHK) shows a compositional bias: basic and acidic residues.

This sequence belongs to the protein-tyrosine phosphatase family. Non-receptor class dual specificity subfamily. Expressed in muscle fibers in a regular striated pattern (at protein level).

It localises to the cytoplasm. The protein resides in the myofibril. The protein localises to the sarcomere. Required for myofiber maturation. The protein is Serine/threonine/tyrosine-interacting-like protein 2 (styxl2) of Danio rerio (Zebrafish).